The chain runs to 152 residues: Glycine cleavage system H protein, mitochondrial (152 aa).

Residues 1-31 (MALRMWASSTANALRLSSATRPHYSPLSRCF) constitute a mitochondrion transit peptide. Positions 53–135 (VATVGITDHA…YEDGWMIKVK (83 aa)) constitute a Lipoyl-binding domain. N6-lipoyllysine is present on K94.

The protein belongs to the GcvH family. In terms of assembly, the glycine cleavage system is composed of four proteins: P, T, L and H. (R)-lipoate serves as cofactor.

The protein resides in the mitochondrion. In terms of biological role, the glycine cleavage system catalyzes the degradation of glycine. The H protein shuttles the methylamine group of glycine from the P protein to the T protein. The sequence is that of Glycine cleavage system H protein, mitochondrial (GDCSH) from Flaveria pubescens (Yellowtops).